The following is a 73-amino-acid chain: Homeodomain-only protein (73 aa).

Positions 3-62 (AETASGPTEDQVEILEYNFNKVDKHPDSTTLCLIAAEAGLSEEETQKWFKQRLAKWRRSE) form a DNA-binding region, homeobox; degenerate.

In terms of assembly, interacts with serum response factor (SRF). Component of a large complex containing histone deacetylases such as HDAC2. Interacts with the acetylated forms of HSPA1A and HSPA1B. Interacts with HSPA8. As to expression, widely expressed. Expressed in the heart, brain, placenta, lung, skeletal and smooth muscles, uterus, urinary bladder, kidney and spleen. Down-regulated in some types of cancer such as lung cancer, choriocarcinoma, head and neck squamous cell carcinoma and oral squamous cell carcinoma.

The protein resides in the nucleus. The protein localises to the cytoplasm. Functionally, atypical homeodomain protein which does not bind DNA and is required to modulate cardiac growth and development. Acts via its interaction with SRF, thereby modulating the expression of SRF-dependent cardiac-specific genes and cardiac development. Prevents SRF-dependent transcription either by inhibiting SRF binding to DNA or by recruiting histone deacetylase (HDAC) proteins that prevent transcription by SRF. Overexpression causes cardiac hypertrophy. May act as a tumor suppressor. Acts as a co-chaperone for HSPA1A and HSPA1B chaperone proteins and assists in chaperone-mediated protein refolding. This chain is Homeodomain-only protein (HOPX), found in Homo sapiens (Human).